Here is a 301-residue protein sequence, read N- to C-terminus: GLABROUS1 enhancer-binding protein-like 2 (301 aa).

Residues 1 to 62 are disordered; that stretch reads MATPTELGFS…NTKMASPPSN (62 aa). A compositionally biased stretch (basic residues) spans 44-54; it reads KKKKKKTKHNT. The segment at 268-289 is non-canonical leucine-zipper; it reads LSNEWKALCVEELKLNINKLRF.

This sequence belongs to the GeBP family. As to quaternary structure, homo- and heterodimers. Interacts with GEBP, GPL1 and GPL3. As to expression, expressed in the apical meristem and young leaf primordia. Detected in the vascular tissues of cotyledons and leaves, in hydathodes and in the septun of siliques, but not in roots.

The protein resides in the nucleus. Probable transcription factor. May play redundant roles with GEBP and GPL1 in cytokinin responses by regulating the transcript levels of type-A ARR response genes. Involved in stress responses. Plays a repressive role in cell expansion by counteracting the positive role of CPR5 in this process, but does not regulate cell proliferation or endoreduplication. This chain is GLABROUS1 enhancer-binding protein-like 2, found in Arabidopsis thaliana (Mouse-ear cress).